The chain runs to 410 residues: Chorismate synthase (410 aa).

Arg40 and Arg46 together coordinate NADP(+). FMN contacts are provided by residues 129–131 (RSS), 257–258 (QA), Gly302, 317–321 (KPISS), and Arg343.

It belongs to the chorismate synthase family. Homotetramer. The cofactor is FMNH2.

The catalysed reaction is 5-O-(1-carboxyvinyl)-3-phosphoshikimate = chorismate + phosphate. It functions in the pathway metabolic intermediate biosynthesis; chorismate biosynthesis; chorismate from D-erythrose 4-phosphate and phosphoenolpyruvate: step 7/7. Functionally, catalyzes the anti-1,4-elimination of the C-3 phosphate and the C-6 proR hydrogen from 5-enolpyruvylshikimate-3-phosphate (EPSP) to yield chorismate, which is the branch point compound that serves as the starting substrate for the three terminal pathways of aromatic amino acid biosynthesis. This reaction introduces a second double bond into the aromatic ring system. This is Chorismate synthase from Chlorobaculum parvum (strain DSM 263 / NCIMB 8327) (Chlorobium vibrioforme subsp. thiosulfatophilum).